We begin with the raw amino-acid sequence, 213 residues long: Inactive ribonuclease-like protein 10 (213 aa).

Positions 1–24 are cleaved as a signal peptide; the sequence is MKLTLVQIFFMMLLLLLGLGMGLG. N-linked (GlcNAc...) asparagine glycosylation occurs at asparagine 131.

This sequence belongs to the pancreatic ribonuclease family. In terms of processing, the N-terminus is blocked. Glycosylated. In terms of tissue distribution, male-specific expression in proximal caput of the epididymis.

It localises to the secreted. Secreted proximal epididymal protein required for post-testicular sperm maturation and male fertility. May be involved in sperm adhesion to the egg zona pellucida. Does not have ribonuclease activity. In Equus caballus (Horse), this protein is Inactive ribonuclease-like protein 10 (RNASE10).